The sequence spans 239 residues: MRPSGREADQLRPLKITRNFTKHAEGSVLIECGDTKVICTATVVSGVPRFLKGKGQGWITAEYGMLPRSTHSRMDREAARGKQGGRTVEIQRLIGRSLRAAVDLKKLGENTITIDCDVIQADGGTRTASITGGFVALADAMRVLVENKKVKENPIVSQIAAISVGVYKGVPVLDLDYPEDSNAETDMNVIMNDKGGFIEIQGTAEGEAFSDEHMMGMLAVARKGIAEIMEAQRAALFDK.

Phosphate contacts are provided by residues R86 and 124–126 (GTR).

The protein belongs to the RNase PH family. In terms of assembly, homohexameric ring arranged as a trimer of dimers.

It catalyses the reaction tRNA(n+1) + phosphate = tRNA(n) + a ribonucleoside 5'-diphosphate. Functionally, phosphorolytic 3'-5' exoribonuclease that plays an important role in tRNA 3'-end maturation. Removes nucleotide residues following the 3'-CCA terminus of tRNAs; can also add nucleotides to the ends of RNA molecules by using nucleoside diphosphates as substrates, but this may not be physiologically important. Probably plays a role in initiation of 16S rRNA degradation (leading to ribosome degradation) during starvation. In Marinomonas sp. (strain MWYL1), this protein is Ribonuclease PH.